The chain runs to 208 residues: Ribonuclease HII (208 aa).

The 190-residue stretch at 12-201 folds into the RNase H type-2 domain; that stretch reads ELVAGVDEVG…VRALLEPVAV (190 aa). Aspartate 18, glutamate 19, and aspartate 110 together coordinate a divalent metal cation.

It belongs to the RNase HII family. The cofactor is Mn(2+). Mg(2+) serves as cofactor.

The protein localises to the cytoplasm. It catalyses the reaction Endonucleolytic cleavage to 5'-phosphomonoester.. Its function is as follows. Endonuclease that specifically degrades the RNA of RNA-DNA hybrids. The sequence is that of Ribonuclease HII from Ectopseudomonas mendocina (strain ymp) (Pseudomonas mendocina).